We begin with the raw amino-acid sequence, 183 residues long: A-type ATP synthase subunit E (183 aa).

It belongs to the V-ATPase E subunit family. In terms of assembly, has multiple subunits, A(3), B(3), C, D, E, F, G, I and K(x); there may be a few other subunits as well.

The protein localises to the cell membrane. Component of the A-type ATP synthase that produces ATP from ADP in the presence of a proton gradient across the membrane. The polypeptide is A-type ATP synthase subunit E (Methanosarcina mazei (strain ATCC BAA-159 / DSM 3647 / Goe1 / Go1 / JCM 11833 / OCM 88) (Methanosarcina frisia)).